Here is a 280-residue protein sequence, read N- to C-terminus: Vacuolar protein sorting-associated protein 71 (280 aa).

A compositionally biased stretch (polar residues) spans 64 to 73 (RSEGDGNSIS). The tract at residues 64–92 (RSEGDGNSISRQDDRNSKNSHSFEERYTQ) is disordered. Over residues 74–92 (RQDDRNSKNSHSFEERYTQ) the composition is skewed to basic and acidic residues. Residues Cys-244, Cys-247, Cys-256, Cys-259, Cys-264, Cys-268, His-272, and Cys-277 each contribute to the Zn(2+) site. Residues 244 to 277 (CSICGGYDSISSCVNCGNKICSVSCFKLHNETRC) form an HIT-type zinc finger.

As to quaternary structure, belongs to the SWR1 complex at least composed of ACT1, ARP4, RVB1, RVB2, ARP6, YAF9, VPS71, VPS72, SWC3, SWC4, SWC5, SWR1 and HTZ1.

Its subcellular location is the nucleus. Its function is as follows. Participates in the catalytic exchange of histone H2A for the H2A variant HZT1, an euchromatin-specific factor, leading to chromatin remodeling and changes in transcription of targeted genes. Indirectly involved in vacuolar protein sorting. In Saccharomyces cerevisiae (strain ATCC 204508 / S288c) (Baker's yeast), this protein is Vacuolar protein sorting-associated protein 71 (VPS71).